A 178-amino-acid chain; its full sequence is ATP synthase subunit delta (178 aa).

The protein belongs to the ATPase delta chain family. In terms of assembly, F-type ATPases have 2 components, F(1) - the catalytic core - and F(0) - the membrane proton channel. F(1) has five subunits: alpha(3), beta(3), gamma(1), delta(1), epsilon(1). F(0) has three main subunits: a(1), b(2) and c(10-14). The alpha and beta chains form an alternating ring which encloses part of the gamma chain. F(1) is attached to F(0) by a central stalk formed by the gamma and epsilon chains, while a peripheral stalk is formed by the delta and b chains.

It is found in the cell membrane. F(1)F(0) ATP synthase produces ATP from ADP in the presence of a proton or sodium gradient. F-type ATPases consist of two structural domains, F(1) containing the extramembraneous catalytic core and F(0) containing the membrane proton channel, linked together by a central stalk and a peripheral stalk. During catalysis, ATP synthesis in the catalytic domain of F(1) is coupled via a rotary mechanism of the central stalk subunits to proton translocation. In terms of biological role, this protein is part of the stalk that links CF(0) to CF(1). It either transmits conformational changes from CF(0) to CF(1) or is implicated in proton conduction. This is ATP synthase subunit delta from Desulfitobacterium hafniense (strain Y51).